The chain runs to 79 residues: Sec-independent protein translocase protein TatA (79 aa).

A helical transmembrane segment spans residues Met-1–Phe-21. Basic and acidic residues predominate over residues Glu-49 to Lys-61. The segment at Glu-49–Ala-79 is disordered.

The protein belongs to the TatA/E family. In terms of assembly, the Tat system comprises two distinct complexes: a TatABC complex, containing multiple copies of TatA, TatB and TatC subunits, and a separate TatA complex, containing only TatA subunits. Substrates initially bind to the TatABC complex, which probably triggers association of the separate TatA complex to form the active translocon.

The protein resides in the cell inner membrane. Part of the twin-arginine translocation (Tat) system that transports large folded proteins containing a characteristic twin-arginine motif in their signal peptide across membranes. TatA could form the protein-conducting channel of the Tat system. This is Sec-independent protein translocase protein TatA from Campylobacter jejuni subsp. doylei (strain ATCC BAA-1458 / RM4099 / 269.97).